Consider the following 133-residue polypeptide: Ribosome-binding factor A (133 aa).

The protein belongs to the RbfA family. In terms of assembly, monomer. Binds 30S ribosomal subunits, but not 50S ribosomal subunits or 70S ribosomes.

It is found in the cytoplasm. Functionally, one of several proteins that assist in the late maturation steps of the functional core of the 30S ribosomal subunit. Associates with free 30S ribosomal subunits (but not with 30S subunits that are part of 70S ribosomes or polysomes). Required for efficient processing of 16S rRNA. May interact with the 5'-terminal helix region of 16S rRNA. The sequence is that of Ribosome-binding factor A from Salmonella typhimurium (strain LT2 / SGSC1412 / ATCC 700720).